The following is a 367-amino-acid chain: tRNA-specific 2-thiouridylase MnmA (367 aa).

Residues 12 to 19 and Met38 each bind ATP; that span reads GMSGGVDS. Residues 98 to 100 form an interaction with target base in tRNA region; it reads NPD. The active-site Nucleophile is the Cys103. Cysteines 103 and 200 form a disulfide. Residue Gly128 coordinates ATP. An interaction with tRNA region spans residues 150-152; sequence KDQ. The Cysteine persulfide intermediate role is filled by Cys200. Residues 312–313 form an interaction with tRNA region; that stretch reads RY.

It belongs to the MnmA/TRMU family.

It localises to the cytoplasm. The catalysed reaction is S-sulfanyl-L-cysteinyl-[protein] + uridine(34) in tRNA + AH2 + ATP = 2-thiouridine(34) in tRNA + L-cysteinyl-[protein] + A + AMP + diphosphate + H(+). Functionally, catalyzes the 2-thiolation of uridine at the wobble position (U34) of tRNA, leading to the formation of s(2)U34. In Psychromonas ingrahamii (strain DSM 17664 / CCUG 51855 / 37), this protein is tRNA-specific 2-thiouridylase MnmA.